The chain runs to 303 residues: Plasmodesmata-located protein 1 (303 aa).

Residues 1 to 21 (MKLTYQFFIFWFFLPFFAISG) form the signal peptide. Topologically, residues 22–268 (DDDYKNLIFK…GEKRQHTERT (247 aa)) are extracellular. 2 consecutive Gnk2-homologous domains span residues 27 to 136 (NLIF…SSGF) and 141 to 248 (GTEM…YYSH). 6 disulfide bridges follow: Cys33-Cys108, Cys84-Cys93, Cys96-Cys127, Cys149-Cys226, Cys202-Cys211, and Cys214-Cys239. Residues 269–289 (IALAVGGVFVLGFVIVCLLVL) form a helical membrane-spanning segment. Residues 269–289 (IALAVGGVFVLGFVIVCLLVL) form a necessary and sufficient for plasmodesmal targeting region. Residues 290 to 303 (RSAMKKKSNKYDAY) lie on the Cytoplasmic side of the membrane.

Belongs to the cysteine-rich repeat secretory protein family. Plasmodesmata-located proteins (PDLD) subfamily. As to quaternary structure, interacts with AZI1. Interacts with PDLP5. Does not interact with DIR1. (Microbial infection) Interacts with Grapevine fanleaf virus (GFLV) 2B-MP. Interacts with Cauliflower mosaic virus (CaMV) movement protein. As to expression, highly expressed in cell suspension. Expressed in epidermal and spongy mesophyll cells, and the cell wall interface at the base of the leaf trichome (at protein level). Expressed in haustoria-containing cells.

The protein resides in the cell membrane. It is found in the cell junction. Its subcellular location is the plasmodesma. Functionally, modulates cell-to-cell trafficking. Required for systemic acquired resistance (SAR) which is mediated by the signaling molecules azelaic acid (AzA), glycerol-3-phosphate (G3P), and salicylic acid (SA). Required for the proper localization and stability of AZI1 which is involved in SAR. Mediates callose deposition during downy mildew fungal infection around haustoria. Haustoria are unicellular protrusions from hyphae and function as the site of molecular exchange of nutrients and effectors between host and pathogen. The chain is Plasmodesmata-located protein 1 from Arabidopsis thaliana (Mouse-ear cress).